The primary structure comprises 194 residues: Large ribosomal subunit protein uL6m (194 aa).

It belongs to the universal ribosomal protein uL6 family.

The protein resides in the mitochondrion. This Prototheca wickerhamii protein is Large ribosomal subunit protein uL6m (RPL6).